The primary structure comprises 380 residues: Putative glutamate--cysteine ligase 2 (380 aa).

Belongs to the glutamate--cysteine ligase type 2 family. YbdK subfamily.

It carries out the reaction L-cysteine + L-glutamate + ATP = gamma-L-glutamyl-L-cysteine + ADP + phosphate + H(+). ATP-dependent carboxylate-amine ligase which exhibits weak glutamate--cysteine ligase activity. The chain is Putative glutamate--cysteine ligase 2 from Pseudomonas entomophila (strain L48).